Reading from the N-terminus, the 336-residue chain is Anthranilate phosphoribosyltransferase (336 aa).

Residues Gly-82, 85-86 (GD), Thr-90, 92-95 (NIST), 110-118 (KHGNRSVSS), and Ser-122 each bind 5-phospho-alpha-D-ribose 1-diphosphate. Gly-82 contributes to the anthranilate binding site. Ser-94 lines the Mg(2+) pocket. Asn-113 is an anthranilate binding site. Arg-168 serves as a coordination point for anthranilate. Positions 227 and 228 each coordinate Mg(2+).

It belongs to the anthranilate phosphoribosyltransferase family. As to quaternary structure, homodimer. Mg(2+) is required as a cofactor.

It carries out the reaction N-(5-phospho-beta-D-ribosyl)anthranilate + diphosphate = 5-phospho-alpha-D-ribose 1-diphosphate + anthranilate. The protein operates within amino-acid biosynthesis; L-tryptophan biosynthesis; L-tryptophan from chorismate: step 2/5. Catalyzes the transfer of the phosphoribosyl group of 5-phosphorylribose-1-pyrophosphate (PRPP) to anthranilate to yield N-(5'-phosphoribosyl)-anthranilate (PRA). This Leptospira interrogans serogroup Icterohaemorrhagiae serovar copenhageni (strain Fiocruz L1-130) protein is Anthranilate phosphoribosyltransferase.